The following is a 238-amino-acid chain: Ribonuclease PH (238 aa).

Residues arginine 86 and 124 to 126 contribute to the phosphate site; that span reads GTR.

This sequence belongs to the RNase PH family. As to quaternary structure, homohexameric ring arranged as a trimer of dimers.

It carries out the reaction tRNA(n+1) + phosphate = tRNA(n) + a ribonucleoside 5'-diphosphate. Phosphorolytic 3'-5' exoribonuclease that plays an important role in tRNA 3'-end maturation. Removes nucleotide residues following the 3'-CCA terminus of tRNAs; can also add nucleotides to the ends of RNA molecules by using nucleoside diphosphates as substrates, but this may not be physiologically important. Probably plays a role in initiation of 16S rRNA degradation (leading to ribosome degradation) during starvation. The chain is Ribonuclease PH from Klebsiella pneumoniae (strain 342).